A 549-amino-acid polypeptide reads, in one-letter code: CTP synthase (549 aa).

The tract at residues 1–267 (MAKFVFITGG…CREVLDVLQL (267 aa)) is amidoligase domain. Ser13 provides a ligand contact to CTP. Ser13 is a UTP binding site. Residues 14–19 (SIGKGI) and Asp71 each bind ATP. Mg(2+) contacts are provided by Asp71 and Glu141. CTP contacts are provided by residues 148-150 (DIE), 188-193 (KTKPTQ), and Lys224. UTP contacts are provided by residues 188–193 (KTKPTQ) and Lys224. A Glutamine amidotransferase type-1 domain is found at 292 to 534 (KVALVGKYVQ…IEAAQQRLPD (243 aa)). Residue Gly354 participates in L-glutamine binding. Cys381 acts as the Nucleophile; for glutamine hydrolysis in catalysis. L-glutamine is bound by residues 382-385 (LGMQ), Glu405, and Arg462. Residues His507 and Glu509 contribute to the active site.

This sequence belongs to the CTP synthase family. Homotetramer.

The enzyme catalyses UTP + L-glutamine + ATP + H2O = CTP + L-glutamate + ADP + phosphate + 2 H(+). The catalysed reaction is L-glutamine + H2O = L-glutamate + NH4(+). It carries out the reaction UTP + NH4(+) + ATP = CTP + ADP + phosphate + 2 H(+). It participates in pyrimidine metabolism; CTP biosynthesis via de novo pathway; CTP from UDP: step 2/2. With respect to regulation, allosterically activated by GTP, when glutamine is the substrate; GTP has no effect on the reaction when ammonia is the substrate. The allosteric effector GTP functions by stabilizing the protein conformation that binds the tetrahedral intermediate(s) formed during glutamine hydrolysis. Inhibited by the product CTP, via allosteric rather than competitive inhibition. Its function is as follows. Catalyzes the ATP-dependent amination of UTP to CTP with either L-glutamine or ammonia as the source of nitrogen. Regulates intracellular CTP levels through interactions with the four ribonucleotide triphosphates. The chain is CTP synthase from Synechococcus sp. (strain CC9902).